The following is a 509-amino-acid chain: Heat shock 70 kDa protein 14 (509 aa).

Belongs to the heat shock protein 70 family. As to quaternary structure, component of ribosome-associated complex (RAC), a heterodimer composed of Hsp70/DnaK-type chaperone HSPA14 and Hsp40/DnaJ-type chaperone DNAJC2.

The protein localises to the cytoplasm. It localises to the cytosol. Component of the ribosome-associated complex (RAC), a complex involved in folding or maintaining nascent polypeptides in a folding-competent state. In the RAC complex, binds to the nascent polypeptide chain, while DNAJC2 stimulates its ATPase activity. The chain is Heat shock 70 kDa protein 14 (HSPA14) from Bos taurus (Bovine).